Reading from the N-terminus, the 477-residue chain is Ribulose bisphosphate carboxylase large chain (477 aa).

Residues 1-2 constitute a propeptide that is removed on maturation; the sequence is MS. An N-acetylproline modification is found at Pro-3. Lys-14 is modified (N6,N6,N6-trimethyllysine). Substrate is bound by residues Asn-123 and Thr-173. Catalysis depends on Lys-175, which acts as the Proton acceptor. Lys-177 provides a ligand contact to substrate. Residues Lys-201, Asp-203, and Glu-204 each coordinate Mg(2+). At Lys-201 the chain carries N6-carboxylysine. Residue His-294 is the Proton acceptor of the active site. Substrate-binding residues include Arg-295, His-327, and Ser-379.

This sequence belongs to the RuBisCO large chain family. Type I subfamily. Heterohexadecamer of 8 large chains and 8 small chains; disulfide-linked. The disulfide link is formed within the large subunit homodimers. Requires Mg(2+) as cofactor. In terms of processing, the disulfide bond which can form in the large chain dimeric partners within the hexadecamer appears to be associated with oxidative stress and protein turnover.

The protein localises to the plastid. It is found in the chloroplast. It catalyses the reaction 2 (2R)-3-phosphoglycerate + 2 H(+) = D-ribulose 1,5-bisphosphate + CO2 + H2O. The catalysed reaction is D-ribulose 1,5-bisphosphate + O2 = 2-phosphoglycolate + (2R)-3-phosphoglycerate + 2 H(+). In terms of biological role, ruBisCO catalyzes two reactions: the carboxylation of D-ribulose 1,5-bisphosphate, the primary event in carbon dioxide fixation, as well as the oxidative fragmentation of the pentose substrate in the photorespiration process. Both reactions occur simultaneously and in competition at the same active site. In Hyophorbe lagenicaulis (Bottle palm), this protein is Ribulose bisphosphate carboxylase large chain.